Here is a 373-residue protein sequence, read N- to C-terminus: MRSPQTSEKTHTMAKTLQNITDLTLQQLTGRLAEMKEPAWRAKQIHEWLFSHRAESFEEMTTLSKALRKALEETFAITPPEVEQHDNSTEGACPGPTEKLLLRLPDGAMIETVLIPGPGRLTACLSSQAGCALQCSFCATGSLGFKRNLTPGEITGQANALNSMLAASGREQKITNIVFMGMGEPLLNTLNVFDAVETLSTRGYTSSISQRKITISTVGIIPEIAKLATSGMKTKLAVSLHSAFQEKRESLMPLAARRYPLDELQPVLAHYAKNTGEPVTLVYMLLEGVNDTLEDARQLIRFASRFFCKINLIDYNSIVNIPFQSVCSETRDRFRDRLLEAGLQVTLRKSYGTSIHAACGQLAAKGMEHSNKS.

Catalysis depends on Glu-111, which acts as the Proton acceptor. Residues 117 to 356 enclose the Radical SAM core domain; sequence GPGRLTACLS…LRKSYGTSIH (240 aa). Cysteines 124 and 359 form a disulfide. Residues Cys-131, Cys-135, and Cys-138 each coordinate [4Fe-4S] cluster. Residues 183 to 184, Ser-216, 239 to 241, and Asn-316 contribute to the S-adenosyl-L-methionine site; these read GE and SLH. Cys-359 acts as the S-methylcysteine intermediate in catalysis.

This sequence belongs to the radical SAM superfamily. RlmN family. The cofactor is [4Fe-4S] cluster.

It is found in the cytoplasm. It catalyses the reaction adenosine(2503) in 23S rRNA + 2 reduced [2Fe-2S]-[ferredoxin] + 2 S-adenosyl-L-methionine = 2-methyladenosine(2503) in 23S rRNA + 5'-deoxyadenosine + L-methionine + 2 oxidized [2Fe-2S]-[ferredoxin] + S-adenosyl-L-homocysteine. It carries out the reaction adenosine(37) in tRNA + 2 reduced [2Fe-2S]-[ferredoxin] + 2 S-adenosyl-L-methionine = 2-methyladenosine(37) in tRNA + 5'-deoxyadenosine + L-methionine + 2 oxidized [2Fe-2S]-[ferredoxin] + S-adenosyl-L-homocysteine. Its function is as follows. Specifically methylates position 2 of adenine 2503 in 23S rRNA and position 2 of adenine 37 in tRNAs. The chain is Probable dual-specificity RNA methyltransferase RlmN from Chlorobium phaeovibrioides (strain DSM 265 / 1930) (Prosthecochloris vibrioformis (strain DSM 265)).